The sequence spans 496 residues: Probable cytosol aminopeptidase (496 aa).

Residues Lys252 and Asp257 each contribute to the Mn(2+) site. The active site involves Lys264. Asp275, Asp334, and Glu336 together coordinate Mn(2+). Residue Arg338 is part of the active site.

Belongs to the peptidase M17 family. Requires Mn(2+) as cofactor.

The protein resides in the cytoplasm. It carries out the reaction Release of an N-terminal amino acid, Xaa-|-Yaa-, in which Xaa is preferably Leu, but may be other amino acids including Pro although not Arg or Lys, and Yaa may be Pro. Amino acid amides and methyl esters are also readily hydrolyzed, but rates on arylamides are exceedingly low.. The catalysed reaction is Release of an N-terminal amino acid, preferentially leucine, but not glutamic or aspartic acids.. Presumably involved in the processing and regular turnover of intracellular proteins. Catalyzes the removal of unsubstituted N-terminal amino acids from various peptides. This is Probable cytosol aminopeptidase from Leifsonia xyli subsp. xyli (strain CTCB07).